The following is a 117-amino-acid chain: G antigen 12J (117 aa).

Positions 1–117 are disordered; it reads MSWRGRSTYY…PEEGEKQSQC (117 aa). Acidic residues-rich tracts occupy residues 32 to 45 and 87 to 96; these read FSDE…EEGE and ECEDGPDGQE. Residues 103–117 show a composition bias toward basic and acidic residues; that stretch reads EEVKTPEEGEKQSQC.

Belongs to the GAGE family.

This chain is G antigen 12J (GAGE12J), found in Homo sapiens (Human).